The primary structure comprises 663 residues: UvrABC system protein B (663 aa).

The Helicase ATP-binding domain maps to 30-417 (DGIKAGKRHQ…TDKMVEQIIR (388 aa)). An ATP-binding site is contributed by 43-50 (GATGTGKT). Positions 96-119 (YYDYYQPEAYVPSTDTFIEKDASI) match the Beta-hairpin motif. The Helicase C-terminal domain maps to 434–600 (QIDDLLSEIQ…TINKKIHDLI (167 aa)). In terms of domain architecture, UVR spans 627 to 662 (QKTIDNIEKEMKQAAKDLDFEKATELRDMLFELKAE).

It belongs to the UvrB family. In terms of assembly, forms a heterotetramer with UvrA during the search for lesions. Interacts with UvrC in an incision complex.

It is found in the cytoplasm. Its function is as follows. The UvrABC repair system catalyzes the recognition and processing of DNA lesions. A damage recognition complex composed of 2 UvrA and 2 UvrB subunits scans DNA for abnormalities. Upon binding of the UvrA(2)B(2) complex to a putative damaged site, the DNA wraps around one UvrB monomer. DNA wrap is dependent on ATP binding by UvrB and probably causes local melting of the DNA helix, facilitating insertion of UvrB beta-hairpin between the DNA strands. Then UvrB probes one DNA strand for the presence of a lesion. If a lesion is found the UvrA subunits dissociate and the UvrB-DNA preincision complex is formed. This complex is subsequently bound by UvrC and the second UvrB is released. If no lesion is found, the DNA wraps around the other UvrB subunit that will check the other stand for damage. The protein is UvrABC system protein B of Staphylococcus aureus (strain Mu50 / ATCC 700699).